Reading from the N-terminus, the 170-residue chain is Odorant-binding protein 2b (170 aa).

The N-terminal stretch at Met1–Ala15 is a signal peptide. Cys74 and Cys166 are oxidised to a cystine.

This sequence belongs to the calycin superfamily. Lipocalin family. Strongly expressed in genital sphere organs such as the prostate and mammary glands.

It is found in the secreted. Probably binds and transports small hydrophobic volatile molecules. The chain is Odorant-binding protein 2b (OBP2B) from Homo sapiens (Human).